Here is an 89-residue protein sequence, read N- to C-terminus: Signal recognition particle 19 kDa protein (89 aa).

This sequence belongs to the SRP19 family. As to quaternary structure, part of the signal recognition particle protein translocation system, which is composed of SRP and FtsY. Archaeal SRP consists of a 7S RNA molecule of 300 nucleotides and two protein subunits: SRP54 and SRP19.

The protein resides in the cytoplasm. Its function is as follows. Involved in targeting and insertion of nascent membrane proteins into the cytoplasmic membrane. Binds directly to 7S RNA and mediates binding of the 54 kDa subunit of the SRP. The protein is Signal recognition particle 19 kDa protein of Methanococcus vannielii (strain ATCC 35089 / DSM 1224 / JCM 13029 / OCM 148 / SB).